The following is a 314-amino-acid chain: Mitochondrial thiamine pyrophosphate carrier 1 (314 aa).

6 helical membrane passes run 14-30, 84-100, 116-136, 170-186, 217-233, and 285-302; these read VAAW…GLLA, LLYV…YSLF, LVVG…FDVL, GSIA…SIMF, SAGT…TFPL, and GILV…VSFW. Solcar repeat units follow at residues 14-103, 110-195, and 210-310; these read VAAW…FNRY, EARL…IRIY, and ELAT…AIHY.

Belongs to the mitochondrial carrier (TC 2.A.29) family.

It localises to the mitochondrion inner membrane. Functionally, mitochondrial transporter that mediates uptake of thiamine pyrophosphate (ThPP) into mitochondria. In Saccharomyces cerevisiae (strain ATCC 204508 / S288c) (Baker's yeast), this protein is Mitochondrial thiamine pyrophosphate carrier 1 (TPC1).